We begin with the raw amino-acid sequence, 200 residues long: MNPRKKVDLKLIIIGALGVGKTSLLHRYVHKTFYEDYQTTLGASILSKIIILEDTTLKLQIWDTGGQERFRSMVSTFYKGSDGCVLAFDVTDLESFEALETWRGDVLAKTIPMEQPYPMVVLGNKIDLEDRQVPQEVAQGWCKEKDIPYFEVSAKNDINVVQAFEMLASRALSRYRSILESYLTDSIKLSPEDQPKSRCC.

GTP is bound by residues 15-22, 34-40, 63-67, 124-127, and 154-155; these read GALGVGKT, YEDYQTT, DTGGQ, NKID, and AK. 2 short sequence motifs (switch) span residues 28–41 and 67–82; these read YVHK…QTTL and QERF…KGSD. S186 is modified (phosphoserine). Residues C199 and C200 are each lipidated (S-geranylgeranyl cysteine).

It belongs to the small GTPase superfamily. Rab family.

The protein resides in the late endosome. It is found in the lysosome. It localises to the golgi apparatus. The protein localises to the trans-Golgi network. Its subcellular location is the cytoplasmic vesicle. The protein resides in the phagosome. It is found in the phagosome membrane. Controls vesicular trafficking from endosomes to the trans-Golgi network (TGN). Acts as a negative regulator of TLR9 signaling and can suppress TLR9-triggered TNFA, IL6, and IFNB production in macrophages by promoting TLR9 lysosomal degradation. Also negatively regulates TLR4 signaling in macrophages by promoting lysosomal degradation of TLR4. Promotes megakaryocytic differentiation by increasing NF-kappa-B-dependent IL6 production and subsequently enhancing the association of STAT3 with GATA1. Not involved in the regulation of the EGF- and EGFR degradation pathway. This is Ras-related protein Rab-7b (RAB7B) from Bos taurus (Bovine).